The sequence spans 648 residues: Macrolide export ATP-binding/permease protein MacB (648 aa).

The ABC transporter domain occupies 5–243; sequence LELKDIRRSY…AGGTEPVVNT (239 aa). 41 to 48 serves as a coordination point for ATP; sequence GASGSGKS. 4 helical membrane passes run 273–293, 523–543, 576–596, and 600–620; these read LLTMLGIIIGIASVVSIVVVG, LFLTLVAVISLVVGGIGVMNI, AVLVCLVGGALGITLSLLIAF, and LFLPGWEIGFSPLALLLAFLC.

The protein belongs to the ABC transporter superfamily. Macrolide exporter (TC 3.A.1.122) family. Homodimer. Part of the tripartite efflux system MacAB-TolC, which is composed of an inner membrane transporter, MacB, a periplasmic membrane fusion protein, MacA, and an outer membrane component, TolC. The complex forms a large protein conduit and can translocate molecules across both the inner and outer membranes. Interacts with MacA.

Its subcellular location is the cell inner membrane. Its function is as follows. Part of the tripartite efflux system MacAB-TolC. MacB is a non-canonical ABC transporter that contains transmembrane domains (TMD), which form a pore in the inner membrane, and an ATP-binding domain (NBD), which is responsible for energy generation. Confers resistance against macrolides. The sequence is that of Macrolide export ATP-binding/permease protein MacB from Shigella flexneri.